Consider the following 407-residue polypeptide: Myeloid cell nuclear differentiation antigen (407 aa).

The Pyrin domain maps to 1–88 (MVNEYKKILL…VNNLRKEKSK (88 aa)). A disordered region spans residues 108 to 207 (EVGLAAPAPT…RQVDARRNVP (100 aa)). Positions 131 to 137 (PVAQKRK) match the Nuclear localization signal motif. Over residues 139-148 (PNKEKTEAKR) the composition is skewed to basic and acidic residues. The segment covering 177 to 190 (QTSSSTPSNTSFTP) has biased composition (low complexity). Positions 196-394 (AQRQVDARRN…CGSHSFIKVI (199 aa)) constitute an HIN-200 domain.

In terms of assembly, participates in a ternary complex with YY1 and the YY1 target DNA element. Binds nucleolin and nucleophosmin/NPM/B23. In terms of tissue distribution, expressed constitutively in cells of the myeloid lineage. Found in promyelocyte stage cells as well as in all other stage cells including peripheral blood monocytes and granulocytes. Also appears in myeloblast cells in some cases of acute myeloid Leukemia.

Its subcellular location is the nucleus. It is found in the cytoplasm. Functionally, may act as a transcriptional activator/repressor in the myeloid lineage. Plays a role in the granulocyte/monocyte cell-specific response to interferon. Stimulates the DNA binding of the transcriptional repressor protein YY1. In Homo sapiens (Human), this protein is Myeloid cell nuclear differentiation antigen (MNDA).